The following is a 243-amino-acid chain: MIVGEDQLWGRRALEFVDSVERLEAPALISRFESLIASCGFTAYIMAGLPSRNAGLPELTLANGWPRDWFDLYVSENFSAVDPVPRHGATTVHPFVWSDAPYDRDRDPAAHRVMTRAAEFGLVEGYCIPLHYDDGSAAISMAGKDPDLSPAARGAMQLVSIYAHSRLRALSRPKPIRRNRLTPRECEILQWAAQGKTAWEISVILCITERTVKFHLIEAARKLDAANRTAAVAKALTLGLIRL.

The region spanning 174 to 239 (KPIRRNRLTP…AAVAKALTLG (66 aa)) is the HTH luxR-type domain. Positions 198–217 (AWEISVILCITERTVKFHLI) form a DNA-binding region, H-T-H motif.

Belongs to the autoinducer-regulated transcriptional regulatory protein family.

In terms of biological role, responds to the quorum-sensing autoinducer 4-coumaroyl-homoserine lactone to regulate expression of several genes. Represses expression of rpaI in the absence of the inducer. The chain is HTH-type quorum sensing-dependent transcriptional regulator RpaR from Rhodopseudomonas palustris (strain ATCC BAA-98 / CGA009).